Consider the following 75-residue polypeptide: Putative primary metabolism protein HVA1 (75 aa).

The span at 1-13 (MSVQDKQGQNINV) shows a compositional bias: polar residues. Disordered stretches follow at residues 1 to 24 (MSVQDKQGQNINVGDTVYTPYRGG) and 40 to 75 (AAEKGVKNPPKVLFTDQNNKDVAHNPGTLTDLDKQK).

May play a role in primary metabolism. In Cryptococcus neoformans var. grubii serotype A (strain H99 / ATCC 208821 / CBS 10515 / FGSC 9487) (Filobasidiella neoformans var. grubii), this protein is Putative primary metabolism protein HVA1.